The sequence spans 145 residues: MDHYLKKLQDIYKKLEGHPFLFSPSKTNEKEFITLLNQALASTQLYRSIQQLFLTMYKLDPIGFVNYIKASKQEYLCLLINPKLVTKFLKITSFKIYINFRLKTFYISPNKYNNFYIAPSEEKANHLLKEEKTWAKIVEEGGEES.

The protein belongs to the asfivirus K145R family.

Its subcellular location is the virion. This is an uncharacterized protein from African swine fever virus (isolate Pig/Kenya/KEN-50/1950) (ASFV).